We begin with the raw amino-acid sequence, 362 residues long: Histidine biosynthesis bifunctional protein HisB (362 aa).

A histidinol-phosphatase region spans residues 1–173 (MQPTLFIDRD…TVTNCGKRPP (173 aa)). Asp8 functions as the Nucleophile in the catalytic mechanism. Mg(2+) is bound by residues Asp8 and Asp10. Asp10 functions as the Proton donor in the catalytic mechanism. 4 residues coordinate Zn(2+): Cys91, His93, Cys99, and Cys101. Position 128 (Asp128) interacts with Mg(2+). The interval 174 to 362 (RFAEVIRQTK…NEMPSSKGVL (189 aa)) is imidazoleglycerol-phosphate dehydratase.

It in the N-terminal section; belongs to the histidinol-phosphatase family. In the C-terminal section; belongs to the imidazoleglycerol-phosphate dehydratase family. It depends on Mg(2+) as a cofactor. Zn(2+) is required as a cofactor.

Its subcellular location is the cytoplasm. It carries out the reaction D-erythro-1-(imidazol-4-yl)glycerol 3-phosphate = 3-(imidazol-4-yl)-2-oxopropyl phosphate + H2O. It catalyses the reaction L-histidinol phosphate + H2O = L-histidinol + phosphate. Its pathway is amino-acid biosynthesis; L-histidine biosynthesis; L-histidine from 5-phospho-alpha-D-ribose 1-diphosphate: step 6/9. It functions in the pathway amino-acid biosynthesis; L-histidine biosynthesis; L-histidine from 5-phospho-alpha-D-ribose 1-diphosphate: step 8/9. In Haemophilus influenzae (strain 86-028NP), this protein is Histidine biosynthesis bifunctional protein HisB.